Here is a 359-residue protein sequence, read N- to C-terminus: Phosphoserine aminotransferase (359 aa).

L-glutamate is bound at residue Arg41. Pyridoxal 5'-phosphate-binding positions include 75–76 (AS), Trp101, Thr151, Asp171, and Gln194. Lys195 carries the N6-(pyridoxal phosphate)lysine modification. 236 to 237 (NT) provides a ligand contact to pyridoxal 5'-phosphate.

The protein belongs to the class-V pyridoxal-phosphate-dependent aminotransferase family. SerC subfamily. In terms of assembly, homodimer. Requires pyridoxal 5'-phosphate as cofactor.

Its subcellular location is the cytoplasm. It carries out the reaction O-phospho-L-serine + 2-oxoglutarate = 3-phosphooxypyruvate + L-glutamate. The enzyme catalyses 4-(phosphooxy)-L-threonine + 2-oxoglutarate = (R)-3-hydroxy-2-oxo-4-phosphooxybutanoate + L-glutamate. Its pathway is amino-acid biosynthesis; L-serine biosynthesis; L-serine from 3-phospho-D-glycerate: step 2/3. The protein operates within cofactor biosynthesis; pyridoxine 5'-phosphate biosynthesis; pyridoxine 5'-phosphate from D-erythrose 4-phosphate: step 3/5. Functionally, catalyzes the reversible conversion of 3-phosphohydroxypyruvate to phosphoserine and of 3-hydroxy-2-oxo-4-phosphonooxybutanoate to phosphohydroxythreonine. The polypeptide is Phosphoserine aminotransferase (Thiobacillus denitrificans (strain ATCC 25259 / T1)).